The following is a 1014-amino-acid chain: MICAL-like protein 2 (1014 aa).

One can recognise a Calponin-homology (CH) domain in the interval 1-107; it reads MAAIKALQEW…YVSQYYNYFH (107 aa). Residues 1-261 form a forms an intramolecular interaction with the C-terminal coiled coil domain keeping the protein in a closed conformation region; that stretch reads MAAIKALQEW…KLSNLASRQP (261 aa). Phosphoserine occurs at positions 110, 144, and 154. A disordered region spans residues 114 to 181; sequence GMAGMKRPSS…PSPKAAPGTV (68 aa). The region spanning 187-249 is the LIM zinc-binding domain; it reads SICGVCGKHV…THHSSEAVSV (63 aa). At Ser-250 the chain carries Phosphoserine. The necessary and sufficient for interaction with actinins stretch occupies residues 262 to 394; that stretch reads GGGIADTRPI…QGQAASKGVK (133 aa). A mediates targeting to the cell plasma membrane region spans residues 262 to 810; that stretch reads GGGIADTRPI…QDDQTRSCKE (549 aa). 2 disordered regions span residues 311–450 and 609–780; these read LTPP…SRVP and TLPK…RRKK. The span at 332 to 355 shows a compositional bias: polar residues; that stretch reads STVTTTSANSKATTHVTNSSPVGW. The span at 356 to 368 shows a compositional bias: low complexity; that stretch reads SSSAQSSTGTSGS. A compositionally biased stretch (polar residues) spans 384 to 398; it reads PQGQAASKGVKTQLN. Low complexity-rich tracts occupy residues 399–419 and 438–447; these read SSTD…SSRT and PASSSSSHAS. Polar residues-rich tracts occupy residues 624 to 633 and 646 to 656; these read LSHSTTQAFS and VGSTSWTSVSL. Composition is skewed to basic and acidic residues over residues 701–711 and 720–737; these read EGWRARLKPVD and LEQK…DTPR. The span at 747 to 758 shows a compositional bias: polar residues; sequence IHITLTPIQQKR. At Thr-759 the chain carries Phosphothreonine. Ser-773 and Ser-837 each carry phosphoserine. A forms an intramolecular interaction with the N-terminal Calponin-homology and LIM zinc-binding domains-containing region keeping the protein in a closed conformation region spans residues 811-918; that stretch reads KTATWGTRES…LMYKSKDQCL (108 aa). Residues 838 to 985 enclose the bMERB domain; the sequence is PVRLHPNYIS…EQEEDQMLES (148 aa). Residues 845 to 885 are a coiled coil; that stretch reads YISQEELQRQLQDIERQLDALELRGVELEKRLRAAEGDASE. Positions 918–1014 are mediates interaction with RAB13 and is required for transition from the closed to the open conformation; the sequence is LEERQLDLQG…WSSKSKSGQT (97 aa).

In terms of assembly, interacts with RAB13 (GTP-bound form); competes with RAB8A and is involved in tight junctions assembly. Interacts with RAB8A; competes with RAB13 and is involved in E-cadherin endocytic recycling. Interacts with RAB8B. Interacts (preferentially in opened conformation) with ACTN1 and ACTN4; stimulated by RAB13 activation. Interacts (via calponin-homology (CH) domain) with the filamins FLNA, FLNB and FLNC (via actin-binding domain).

The protein resides in the cell membrane. It localises to the cell junction. It is found in the tight junction. Its subcellular location is the recycling endosome. The protein localises to the cell projection. The protein resides in the neuron projection. It localises to the cytoplasm. It is found in the cytoskeleton. Its function is as follows. Effector of small Rab GTPases which is involved in junctional complexes assembly through the regulation of cell adhesion molecules transport to the plasma membrane and actin cytoskeleton reorganization. Regulates the endocytic recycling of occludins, claudins and E-cadherin to the plasma membrane and may thereby regulate the establishment of tight junctions and adherens junctions. In parallel, may regulate actin cytoskeleton reorganization directly through interaction with F-actin or indirectly through actinins and filamins. Most probably involved in the processes of epithelial cell differentiation, cell spreading and neurite outgrowth. Undergoes liquid-liquid phase separation to form tubular recycling endosomes. Plays 2 sequential roles in the biogenesis of tubular recycling endosomes: first organizes phase separation and then the closed form formed by interaction with RAB8A promotes endosomal tubulation. The chain is MICAL-like protein 2 (Micall2) from Rattus norvegicus (Rat).